Here is a 245-residue protein sequence, read N- to C-terminus: Nucleoprotein (245 aa).

The RNA site is built by tyrosine 30, lysine 67, arginine 106, arginine 186, and serine 196.

Belongs to the phlebovirus nucleocapsid protein family. As to quaternary structure, homodimer. Homohexamer; ring-shaped, necessary to form the nucleocapsid. Homopentamers; opened pentamers in solution. Binds to viral genomic RNA. Interacts with glycoprotein Gn; this interaction allows packaging of nucleocapsids into virions.

It is found in the virion. The protein resides in the host cytoplasm. It localises to the host nucleus. The protein localises to the host endoplasmic reticulum-Golgi intermediate compartment. Its subcellular location is the host Golgi apparatus. In terms of biological role, encapsidates the genomic RNA, protecting it from nucleases. Displays high affinity for single-stranded nucleic acid. The encapsidated genomic RNA is termed the nucleocapsid (NC) or ribonucleoprotein. The ribonucleoprotein has a non-helical structure. Serves as template for viral transcription and replication. After replication, the nucleocapsid is recruited to the host Golgi apparatus by glycoprotein Gn for packaging into virus particles. The polypeptide is Nucleoprotein (NP) (Dabie bandavirus (Severe fever with thrombocytopenia virus)).